The following is a 300-amino-acid chain: UPF0761 membrane protein PSHAa0171 (300 aa).

Helical transmembrane passes span Leu-47–Phe-67, Asn-100–Ile-120, Phe-143–Val-163, Phe-181–Leu-201, Ala-215–Leu-235, and Ala-249–Leu-269.

This sequence belongs to the UPF0761 family.

The protein localises to the cell inner membrane. This is UPF0761 membrane protein PSHAa0171 from Pseudoalteromonas translucida (strain TAC 125).